The following is a 258-amino-acid chain: Deoxyribose-phosphate aldolase (258 aa).

Asp-101 serves as the catalytic Proton donor/acceptor. Residue Lys-166 is the Schiff-base intermediate with acetaldehyde of the active site. The Proton donor/acceptor role is filled by Lys-200.

It belongs to the DeoC/FbaB aldolase family. DeoC type 2 subfamily.

It localises to the cytoplasm. It catalyses the reaction 2-deoxy-D-ribose 5-phosphate = D-glyceraldehyde 3-phosphate + acetaldehyde. The protein operates within carbohydrate degradation; 2-deoxy-D-ribose 1-phosphate degradation; D-glyceraldehyde 3-phosphate and acetaldehyde from 2-deoxy-alpha-D-ribose 1-phosphate: step 2/2. Catalyzes a reversible aldol reaction between acetaldehyde and D-glyceraldehyde 3-phosphate to generate 2-deoxy-D-ribose 5-phosphate. The protein is Deoxyribose-phosphate aldolase of Actinobacillus pleuropneumoniae serotype 5b (strain L20).